Reading from the N-terminus, the 144-residue chain is UPF0178 protein Exig_1155 (144 aa).

The segment at 110–144 is disordered; that stretch reads IRRAGGRTKGPKKRTRQEDASFEQSFSRLLTEKTD. A compositionally biased stretch (basic residues) spans 113-124; that stretch reads AGGRTKGPKKRT.

It belongs to the UPF0178 family.

This is UPF0178 protein Exig_1155 from Exiguobacterium sibiricum (strain DSM 17290 / CCUG 55495 / CIP 109462 / JCM 13490 / 255-15).